The following is a 303-amino-acid chain: Acidic endochitinase WIN6.2B (303 aa).

The N-terminal stretch at 1 to 21 (MSVWAFAFFSLFLSLSVRGSA) is a signal peptide. In terms of domain architecture, Chitin-binding type-1 spans 22–62 (EQCGQQAGDALCPGGLCCSSYGWCGTTADYCGDGCQSQCDG). 4 cysteine pairs are disulfide-bonded: C24–C39, C33–C45, C38–C52, and C56–C60. Residues 82 to 303 (DGYLSDIIPE…YGLLGLKDTM (222 aa)) are chitinase. Catalysis depends on E150, which acts as the Proton donor. The cysteines at positions 253 and 286 are disulfide-linked.

This sequence belongs to the glycosyl hydrolase 19 family. Chitinase class I subfamily.

It carries out the reaction Random endo-hydrolysis of N-acetyl-beta-D-glucosaminide (1-&gt;4)-beta-linkages in chitin and chitodextrins.. Defense against chitin-containing fungal pathogens. This is Acidic endochitinase WIN6.2B from Populus trichocarpa (Western balsam poplar).